The chain runs to 86 residues: MMDILIIAEYTLLASLAVFSIAAVRIATRRNIRMGLVGISGLNIAIATILILINRMYGIGFCRDIAYALVLLGPVGTIAFARVLRG.

Transmembrane regions (helical) follow at residues 4 to 24 (ILII…IAAV), 34 to 54 (MGLV…ILIN), and 64 to 84 (DIAY…ARVL).

This sequence to M.jannaschii MJ1223.

Its subcellular location is the cell membrane. This is an uncharacterized protein from Methanothermobacter thermautotrophicus (strain ATCC 29096 / DSM 1053 / JCM 10044 / NBRC 100330 / Delta H) (Methanobacterium thermoautotrophicum).